The following is a 298-amino-acid chain: ADP/ATP translocase 1 (298 aa).

Residues 1–7 (MSDQALS) lie on the Mitochondrial intermembrane side of the membrane. S2 carries the N-acetylserine modification. The stretch at 6-98 (LSFLKDFLAG…FAFKDKYKQI (93 aa)) is one Solcar 1 repeat. S7 carries the post-translational modification Phosphoserine. Residues 8–37 (FLKDFLAGGVAAAISKTAVAPIERVKLLLQ) traverse the membrane as a helical segment. At 38–74 (VQHASKQISAEKQYKGIIDCVVRIPKEQGFLSFWRGN) the chain is on the mitochondrial matrix side. An N6,N6,N6-trimethyllysine modification is found at K52. Residue K52 is modified to N6-methyllysine. The chain crosses the membrane as a helical span at residues 75 to 99 (LANVIRYFPTQALNFAFKDKYKQIF). Residues R80 and K92 each contribute to the ADP site. At 100–109 (LGGVDRHKQF) the chain is on the mitochondrial intermembrane side. A helical transmembrane segment spans residues 110 to 130 (WRYFAGNLASGGAAGATSLCF). 2 Solcar repeats span residues 111 to 201 (RYFA…AKGM) and 212 to 297 (VSWM…IKKF). The Mitochondrial matrix portion of the chain corresponds to 131–178 (VYPLDFARTRLAADVGKGAAQREFTGLGNCITKIFKSDGLRGLYQGFN). An N6-succinyllysine modification is found at K147. C160 carries the S-nitrosocysteine modification. A helical transmembrane segment spans residues 179–199 (VSVQGIIIYRAAYFGVYDTAK). Topologically, residues 200–210 (GMLPDPKNVHI) are mitochondrial intermembrane. The helical transmembrane segment at 211 to 231 (IVSWMIAQTVTAVAGLVSYPF) threads the bilayer. Topologically, residues 232 to 273 (DTVRRRMMMQSGRKGADIMYTGTVDCWRKIAKDEGPKAFFKG) are mitochondrial matrix. R235 is an ADP binding site. The important for transport activity stretch occupies residues 235–240 (RRRMMM). The short motif at 235 to 240 (RRRMMM) is the Nucleotide carrier signature motif element. An N6-succinyllysine mark is found at K245 and K272. Residues 274–291 (AWSNVLRGMGGAFVLVLY) traverse the membrane as a helical segment. The Mitochondrial intermembrane portion of the chain corresponds to 292 to 298 (DEIKKFV).

Belongs to the mitochondrial carrier (TC 2.A.29) family. Monomer. Found in a complex with ARL2, ARL2BP and SLC25A4/ANT1. Interacts with ARL2BP. Interacts with TIMM44; leading to inhibit the presequence translocase TIMM23, thereby promoting stabilization of PINK1. Post-translationally, under cell death induction, transglutaminated by TGM2. Transglutamination leads to formation of covalent cross-links between a glutamine and the epsilon-amino group of a lysine residue, forming polymers. As to expression, detected in heart muscle (at protein level). Detected in heart.

Its subcellular location is the mitochondrion inner membrane. The protein resides in the membrane. The enzyme catalyses ADP(in) + ATP(out) = ADP(out) + ATP(in). It catalyses the reaction H(+)(in) = H(+)(out). Its activity is regulated as follows. The matrix-open state (m-state) is inhibited by the membrane-permeable bongkrekic acid (BKA). The cytoplasmic-open state (c-state) is inhibited by the membrane-impermeable toxic inhibitor carboxyatractyloside (CATR). Proton transporter activity is inhibited by ADP:ATP antiporter activity. Its function is as follows. ADP:ATP antiporter that mediates import of ADP into the mitochondrial matrix for ATP synthesis, and export of ATP out to fuel the cell. Cycles between the cytoplasmic-open state (c-state) and the matrix-open state (m-state): operates by the alternating access mechanism with a single substrate-binding site intermittently exposed to either the cytosolic (c-state) or matrix (m-state) side of the inner mitochondrial membrane. In addition to its ADP:ATP antiporter activity, also involved in mitochondrial uncoupling and mitochondrial permeability transition pore (mPTP) activity. Plays a role in mitochondrial uncoupling by acting as a proton transporter: proton transport uncouples the proton flows via the electron transport chain and ATP synthase to reduce the efficiency of ATP production and cause mitochondrial thermogenesis. Proton transporter activity is inhibited by ADP:ATP antiporter activity, suggesting that SLC25A4/ANT1 acts as a master regulator of mitochondrial energy output by maintaining a delicate balance between ATP production (ADP:ATP antiporter activity) and thermogenesis (proton transporter activity). Proton transporter activity requires free fatty acids as cofactor, but does not transport it. Probably mediates mitochondrial uncoupling in tissues that do not express UCP1. Also plays a key role in mPTP opening, a non-specific pore that enables free passage of the mitochondrial membranes to solutes of up to 1.5 kDa, and which contributes to cell death. It is however unclear if SLC25A4/ANT1 constitutes a pore-forming component of mPTP or regulates it. Acts as a regulator of mitophagy independently of ADP:ATP antiporter activity: promotes mitophagy via interaction with TIMM44, leading to inhibit the presequence translocase TIMM23, thereby promoting stabilization of PINK1. In Bos taurus (Bovine), this protein is ADP/ATP translocase 1.